Consider the following 116-residue polypeptide: uncharacterized protein (116 aa).

This is an uncharacterized protein from Saccharolobus islandicus (Sulfolobus islandicus).